Consider the following 277-residue polypeptide: Tetrahydroxynaphthalene reductase PfmaG (277 aa).

Positions 36, 82, and 109 each coordinate NADP(+). Active-site proton donor residues include S158, S159, and Y173. NADP(+) is bound by residues Y173, K177, I206, and T208. The Lowers pKa of active site Tyr role is filled by K177.

It belongs to the short-chain dehydrogenases/reductases (SDR) family.

It catalyses the reaction scytalone + NADP(+) = naphthalene-1,3,6,8-tetrol + NADPH + H(+). Its pathway is pigment biosynthesis; melanin biosynthesis. Its function is as follows. Tetrahydroxynaphthalene reductase; part of the gene cluster that mediates the biosynthesis of dihydroxynaphthalene (DHN)-melanin, a bluish-green pigment forming a dark layer in the conidial wall that protects the conidia from UV radiations. The first step of the pathway is the production of the pentaketide 1,3,6,8-tetrahydroxynaphthalene (1,3,6,8-THN or T4HN) by the polyketide synthase PfmaE though condensation of acetyl-CoA with malonyl-CoA. T4HN is not stable and easily oxidizes into the stable form flaviolin. T4HN is also substrate of the hydroxynaphthalene reductase PfmaG to yield scytalone. The scytalone dehydratase PfmaJ then reduces scytalone to 1,3,8-THN. 1,3,8-THN is then substrate of the hydroxynaphthalene reductase PfmaI to yield vermelone. Vermelone is further converted by the multicopper oxidase PfmaD to 1,8-DHN. Finally the laccase PFICI_06862 transforms 1,8-DHN to DHN-melanin. The roles of the 5-oxoprolinase PfmaA and the proline iminopeptidase PfmaB within the cluster have not been elucidated yet. This Pestalotiopsis fici (strain W106-1 / CGMCC3.15140) protein is Tetrahydroxynaphthalene reductase PfmaG.